The primary structure comprises 176 residues: Protein MAL2 (176 aa).

Residues 1–34 are Cytoplasmic-facing; the sequence is MSAGGASVPPPPNPAVSFPPPRVTLPAGPDILRT. The region spanning 31-175 is the MARVEL domain; the sequence is ILRTYSGAFV…SLGLALRRWR (145 aa). The helical transmembrane segment at 35 to 55 threads the bilayer; it reads YSGAFVCLEILFGGLVWILVA. Residues 56-66 lie on the Lumenal side of the membrane; that stretch reads SSNVPLPLLQG. A helical membrane pass occupies residues 67–87; sequence WVMFVSVTAFFFSLLFLGMFL. At 88–102 the chain is on the cytoplasmic side; it reads SGMVAQIDANWNFLD. The chain crosses the membrane as a helical span at residues 103 to 123; it reads FAYHFTVFVFYFGAFLLEAAA. Residues 124 to 149 are Lumenal-facing; the sequence is TSLHDLHCNTTITGQPLLSDNQYNIN. N-linked (GlcNAc...) asparagine glycosylation occurs at asparagine 132. A helical membrane pass occupies residues 150-170; sequence VAASIFAFMTTACYGCSLGLA. The Cytoplasmic segment spans residues 171 to 176; that stretch reads LRRWRP.

The protein belongs to the MAL family. As to quaternary structure, interacts with TPD52L2. As to expression, predominantly expressed in kidney, lung, and liver. Also found in thyroid gland, stomach and, at lower levels in testis and small intestine.

The protein localises to the cell membrane. The protein resides in the apical cell membrane. Its subcellular location is the endomembrane system. It localises to the cytoplasm. It is found in the perinuclear region. Member of the machinery of polarized transport. Required for the indirect transcytotic route at the step of the egress of the transcytosing cargo from perinuclear endosomes in order for it to travel to the apical surface via a raft-dependent pathway. The protein is Protein MAL2 (MAL2) of Homo sapiens (Human).